Reading from the N-terminus, the 445-residue chain is Response regulator protein PilR (445 aa).

Positions 5–119 (KALIVDDEPD…RLRELVATAL (115 aa)) constitute a Response regulatory domain. Asp-11 and Asp-54 each carry 4-aspartylphosphate. Positions 135 to 364 (LLGESPPMRA…LENMLERAYT (230 aa)) constitute a Sigma-54 factor interaction domain. Residues 163–170 (GESGSGKE) and 226–235 (ASGGTLFLDE) each bind ATP. The H-T-H motif DNA-binding region spans 418–437 (RWNRTAAAQRLGLTFRSMRY).

In terms of processing, phosphorylated by PilS.

It localises to the cytoplasm. Its function is as follows. Member of the two-component regulatory system PilS/PilR that regulates the expression of multiple genes including the type IV pilus (T4P) major subunit PilA. Thereby, plays a major role in the regulation of multiple motility pathways. Upon appropriate environmental signals, the histidine kinase PilS transfers the phosphoryl group onto PilR. In turn, PilR functions as a transcriptional activator by direct binding to a cis-acting sequence upstream of the pilin gene promoter leading to its activation. The protein is Response regulator protein PilR (pilR) of Pseudomonas aeruginosa (strain ATCC 15692 / DSM 22644 / CIP 104116 / JCM 14847 / LMG 12228 / 1C / PRS 101 / PAO1).